Consider the following 110-residue polypeptide: UPF0122 protein lmo1802 (110 aa).

This sequence belongs to the UPF0122 family.

Might take part in the signal recognition particle (SRP) pathway. This is inferred from the conservation of its genetic proximity to ftsY/ffh. May be a regulatory protein. The chain is UPF0122 protein lmo1802 from Listeria monocytogenes serovar 1/2a (strain ATCC BAA-679 / EGD-e).